The sequence spans 244 residues: tRNA pseudouridine synthase A (244 aa).

Asp52 serves as the catalytic Nucleophile. Tyr110 is a binding site for substrate.

Belongs to the tRNA pseudouridine synthase TruA family. As to quaternary structure, homodimer.

The catalysed reaction is uridine(38/39/40) in tRNA = pseudouridine(38/39/40) in tRNA. Its function is as follows. Formation of pseudouridine at positions 38, 39 and 40 in the anticodon stem and loop of transfer RNAs. The sequence is that of tRNA pseudouridine synthase A from Thermoanaerobacter pseudethanolicus (strain ATCC 33223 / 39E) (Clostridium thermohydrosulfuricum).